Here is a 238-residue protein sequence, read N- to C-terminus: Ribosomal RNA small subunit methyltransferase G (238 aa).

Residues Gly78, Phe83, 129–130, and Arg148 each bind S-adenosyl-L-methionine; that span reads AE. The disordered stretch occupies residues 217 to 238; that stretch reads KKKETPKKYPRKAGTPAKSPIK.

This sequence belongs to the methyltransferase superfamily. RNA methyltransferase RsmG family.

It is found in the cytoplasm. Functionally, specifically methylates the N7 position of a guanine in 16S rRNA. In Lactococcus lactis subsp. cremoris (strain MG1363), this protein is Ribosomal RNA small subunit methyltransferase G.